We begin with the raw amino-acid sequence, 52 residues long: Insulin (52 aa).

3 disulfide bridges follow: Cys7–Cys38, Cys19–Cys51, and Cys37–Cys42.

This sequence belongs to the insulin family. Heterodimer of a B chain and an A chain linked by two disulfide bonds.

It is found in the secreted. Its function is as follows. Insulin decreases blood glucose concentration. It increases cell permeability to monosaccharides, amino acids and fatty acids. It accelerates glycolysis, the pentose phosphate cycle, and glycogen synthesis in liver. The protein is Insulin (ins) of Amia calva (Bowfin).